A 468-amino-acid polypeptide reads, in one-letter code: Spliceosome-associated protein CWC27 homolog (468 aa).

Ser-2 is subject to N-acetylserine. A PPIase cyclophilin-type domain is found at 11–166 (TNGKVLLKTT…NPHRIKSCEV (156 aa)). 2 disordered regions span residues 204–382 (LLSF…EDQT) and 427–468 (RKVK…KERR). Residues 206-229 (SFGEEAEEEEEEVNRVSQSMKGRS) adopt a coiled-coil conformation. Residues 231–241 (SSHDLLKDDPH) are compositionally biased toward basic and acidic residues. Residues 256–268 (TGDLEDDAEDDSV) show a composition bias toward acidic residues. Basic and acidic residues-rich tracts occupy residues 269–287 (EHDG…ERIA) and 302–342 (GDGE…AEKG). Position 273 is a phosphoserine (Ser-273). Residues 309–342 (ASRSEELRKEARQLKRELLAAKQKKESATKAEKG) are a coiled coil. Ser-343 is subject to Phosphoserine. Composition is skewed to basic and acidic residues over residues 356–368 (EYRR…EALR) and 453–468 (RREE…KERR).

Belongs to the cyclophilin-type PPIase family. As to quaternary structure, part of the activated spliceosome B/catalytic step 1 spliceosome, one of the forms of the spliceosome which has a well-formed active site but still cannot catalyze the branching reaction and is composed at least of 52 proteins, the U2, U5 and U6 snRNAs and the pre-mRNA. Recruited during early steps of activated spliceosome B maturation, it is probably one of the first proteins released from this complex as he matures to the spliceosome C complex. Component of the minor spliceosome, which splices U12-type introns.

It is found in the nucleus. In terms of biological role, as part of the spliceosome, plays a role in pre-mRNA splicing. Probable inactive PPIase with no peptidyl-prolyl cis-trans isomerase activity. As a component of the minor spliceosome, involved in the splicing of U12-type introns in pre-mRNAs. The polypeptide is Spliceosome-associated protein CWC27 homolog (Rattus norvegicus (Rat)).